We begin with the raw amino-acid sequence, 498 residues long: Putative F-box/FBD/LRR-repeat protein At4g03220 (498 aa).

The region spanning 23–71 (VDRISNLPDSLNHQILLLLPLKSAAQASLLSKRWRSLFLSLPDLDFTSI) is the F-box domain. 3 LRR repeats span residues 148 to 172 (SQNL…SSAR), 175 to 200 (FQKL…FFTD), and 235 to 259 (SLQL…CFYS). The 51-residue stretch at 416–466 (YWESQAYELESFLNHLEFVEIHGFVECENEMSLAIFLLRHGKALIKMTLRS) folds into the FBD domain.

In Arabidopsis thaliana (Mouse-ear cress), this protein is Putative F-box/FBD/LRR-repeat protein At4g03220.